The chain runs to 271 residues: Solute carrier family 66 member 2 (271 aa).

The next 3 membrane-spanning stretches (helical) occupy residues 8–28, 49–69, and 76–96; these read WLLV…MVFG, FSTY…LFWF, and PLLW…KLCT. The region spanning 14–80 is the PQ-loop 1 domain; sequence HQLVSWGAAA…RRFESPLLWQ (67 aa). A Phosphoserine modification is found at Ser110. 3 helical membrane-spanning segments follow: residues 145–165, 168–188, and 232–252; these read DYVQ…YLSI, ALFV…LGVP, and VCGL…YAFA. Residues 178-233 form the PQ-loop 2 domain; that stretch reads AVLTEAMLGVPQLYRNHRHQSTEGMSIKMVLMWTSGDAFKTAYFLLKGAPLQFSVC.

The protein resides in the membrane. The protein is Solute carrier family 66 member 2 of Homo sapiens (Human).